Consider the following 309-residue polypeptide: MVGFKATDVPPTATVKFLGAGTAACIADLITFPLDTAKVRLQIQGERQGPMQAAASAQYRGVLGTILTMVRTEGPRSLYSGLVAGLQRQMSFASVRIGLYDSVKQFYTKGSEHAGIGSRLLAGSTTGALAVAVAQPTDVVKVRFQAQARAGAGRRYQSTVEAYKTIAREEGFRGLWKGTSPNVARNAIVNCAELVTYDLIKDTLLKAHLMTDDLPCHFTSAFGAGFCTTVIASPVDVVKTRYMNSALGQYSSAGHCALTMLQKEGPQAFYKGFMPSFLRLGSWNVVMFVTYEQLKRALMAARASREAPF.

Topologically, residues 1-16 (MVGFKATDVPPTATVK) are mitochondrial intermembrane. 3 Solcar repeats span residues 11–106 (PTAT…VKQF), 114–203 (AGIG…IKDT), and 212–297 (DDLP…LKRA). Positions 16–63 (KFLGAGTAACIADLITFPLDTAKVRLQIQGERQGPMQAAASAQYRGVL) are important for interaction with long-chain fatty acids. A helical membrane pass occupies residues 17–40 (FLGAGTAACIADLITFPLDTAKVR). At 41 to 77 (LQIQGERQGPMQAAASAQYRGVLGTILTMVRTEGPRS) the chain is on the mitochondrial matrix side. A helical transmembrane segment spans residues 78 to 103 (LYSGLVAGLQRQMSFASVRIGLYDSV). Over 104–119 (KQFYTKGSEHAGIGSR) the chain is Mitochondrial intermembrane. Residues 120-145 (LLAGSTTGALAVAVAQPTDVVKVRFQ) traverse the membrane as a helical segment. Residues 146 to 173 (AQARAGAGRRYQSTVEAYKTIAREEGFR) lie on the Mitochondrial matrix side of the membrane. Residues 174–199 (GLWKGTSPNVARNAIVNCAELVTYDL) form a helical membrane-spanning segment. At 200 to 217 (IKDTLLKAHLMTDDLPCH) the chain is on the mitochondrial intermembrane side. Residues 218 to 242 (FTSAFGAGFCTTVIASPVDVVKTRY) form a helical membrane-spanning segment. At 243-268 (MNSALGQYSSAGHCALTMLQKEGPQA) the chain is on the mitochondrial matrix side. The chain crosses the membrane as a helical span at residues 269–294 (FYKGFMPSFLRLGSWNVVMFVTYEQL). An important for interaction with long-chain fatty acids region spans residues 278–285 (LRLGSWNV). Residues 295-309 (KRALMAARASREAPF) are Mitochondrial intermembrane-facing.

The protein belongs to the mitochondrial carrier (TC 2.A.29) family. Homotetramer. Adopts an asymmetrical dimer of dimers functional form. Interacts with MICU1 (when methylated); leading to decrease the calcium sensitivity of MICU1.

The protein localises to the mitochondrion inner membrane. The catalysed reaction is L-aspartate(out) + phosphate(in) + H(+)(in) = L-aspartate(in) + phosphate(out) + H(+)(out). The enzyme catalyses oxaloacetate(out) + phosphate(in) + H(+)(in) = oxaloacetate(in) + phosphate(out) + H(+)(out). It carries out the reaction (S)-malate(out) + phosphate(in) + H(+)(in) = (S)-malate(in) + phosphate(out) + H(+)(out). It catalyses the reaction malonate(out) + phosphate(in) + H(+)(in) = malonate(in) + phosphate(out) + H(+)(out). The catalysed reaction is sulfate(out) + phosphate(in) + H(+)(in) = sulfate(in) + phosphate(out) + H(+)(out). The enzyme catalyses (S)-malate(out) = (S)-malate(in). It carries out the reaction L-aspartate(out) = L-aspartate(in). It catalyses the reaction phosphate(in) = phosphate(out). The catalysed reaction is chloride(in) = chloride(out). The enzyme catalyses H(+)(in) = H(+)(out). It carries out the reaction a long-chain fatty acid(out) = a long-chain fatty acid(in). Its function is as follows. Antiporter that exports dicarboxylate intermediates of the Krebs cycle in exchange for phosphate plus a proton across the inner membrane of mitochondria, a process driven by mitochondrial motive force with an overall impact on glycolysis, glutaminolysis and glutathione-dependent redox balance. Continuous export of oxaloacetate and related four-carbon dicarboxylates from mitochondrial matrix into the cytosol negatively regulates the oxidation of acetyl-CoA substrates via the Krebs cycle lowering the ATP/ADP ratio and reactive oxygen species (ROS) production. May mediate inducible proton entry into the mitochondrial matrix affecting ATP turnover as a protection mechanism against oxidative stress. The proton currents are most likely associated with fatty acid flipping across the inner membrane of mitochondria in a metabolic process regulated by free fatty acids and purine nucleotides. Regulates the use of glucose as a source of energy. Required for glucose-induced DRP1-dependent mitochondrial fission and neuron activation in the ventromedial nucleus of the hypothalamus (VMH). This mitochondrial adaptation mechanism modulates the VMH pool of glucose-excited neurons with an impact on systemic glucose homeostasis. Regulates ROS levels and metabolic reprogramming of macrophages during the resolution phase of inflammation. Attenuates ROS production in response to IL33 to preserve the integrity of the Krebs cycle required for persistent production of itaconate and subsequent GATA3-dependent differentiation of inflammation-resolving alternatively activated macrophages. Can unidirectionally transport anions including L-malate, L-aspartate, phosphate and chloride ions. Does not mediate adaptive thermogenesis. The chain is Dicarboxylate carrier UCP2 (UCP2) from Bos taurus (Bovine).